We begin with the raw amino-acid sequence, 193 residues long: Ion-translocating oxidoreductase complex subunit B (193 aa).

The hydrophobic stretch occupies residues 1-26 (MSTMLIAVILLTLLALFFGVLLGFAA). Positions 32–90 (EGNPIVDELEAILPQTQCGQCGYPGCRPYAEAIANGDKVNKCPPGGTATMEKLANLMGV) constitute a 4Fe-4S domain. 12 residues coordinate [4Fe-4S] cluster: Cys49, Cys52, Cys57, Cys73, Cys114, Cys117, Cys120, Cys124, Cys144, Cys147, Cys150, and Cys154. 4Fe-4S ferredoxin-type domains are found at residues 105–134 (KVAY…GAGK) and 136–164 (MHTV…MIPV).

This sequence belongs to the 4Fe4S bacterial-type ferredoxin family. RnfB subfamily. The complex is composed of six subunits: RnfA, RnfB, RnfC, RnfD, RnfE and RnfG. It depends on [4Fe-4S] cluster as a cofactor.

It localises to the cell inner membrane. In terms of biological role, part of a membrane-bound complex that couples electron transfer with translocation of ions across the membrane. The sequence is that of Ion-translocating oxidoreductase complex subunit B from Shewanella sp. (strain ANA-3).